The chain runs to 57 residues: uncharacterized protein (57 aa).

It is found in the plastid. This is an uncharacterized protein from Euglena longa (Euglenophycean alga).